A 196-amino-acid polypeptide reads, in one-letter code: Glycerol-3-phosphate acyltransferase 2 (196 aa).

The next 5 helical transmembrane spans lie at G2–I22, V52–I72, I80–F100, I112–V132, and Y137–L156.

This sequence belongs to the PlsY family. As to quaternary structure, probably interacts with PlsX.

It is found in the cell inner membrane. It carries out the reaction an acyl phosphate + sn-glycerol 3-phosphate = a 1-acyl-sn-glycero-3-phosphate + phosphate. It participates in lipid metabolism; phospholipid metabolism. In terms of biological role, catalyzes the transfer of an acyl group from acyl-phosphate (acyl-PO(4)) to glycerol-3-phosphate (G3P) to form lysophosphatidic acid (LPA). This enzyme utilizes acyl-phosphate as fatty acyl donor, but not acyl-CoA or acyl-ACP. The protein is Glycerol-3-phosphate acyltransferase 2 of Thermotoga maritima (strain ATCC 43589 / DSM 3109 / JCM 10099 / NBRC 100826 / MSB8).